Reading from the N-terminus, the 290-residue chain is Syntaxin-1A (290 aa).

Residues 1–21 (MTKDRLAALQAAQSDDEDMPE) form a disordered region. Residues 1-267 (MTKDRLAALQ…KYQSKARRKK (267 aa)) are Cytoplasmic-facing. The t-SNARE coiled-coil homology domain maps to 194 to 256 (LADIEARHAD…QTATQDTKKA (63 aa)). A helical; Anchor for type IV membrane protein membrane pass occupies residues 268–289 (IWIAICVLIAIIILVVFLAIYL). Position 290 (threonine 290) is a topological domain, vesicular.

This sequence belongs to the syntaxin family. In terms of processing, (Microbial infection) Targeted and hydrolyzed by the light chain (LC) of P.bifermentans PMP1. Cleavage probably inhibits neurotransmitter release.

The protein resides in the cytoplasmic vesicle. It localises to the secretory vesicle. Its subcellular location is the synaptic vesicle membrane. In terms of biological role, plays a critical role in several secretory processes. The sequence is that of Syntaxin-1A from Anopheles gambiae (African malaria mosquito).